Reading from the N-terminus, the 119-residue chain is Ribonuclease P protein component (119 aa).

This sequence belongs to the RnpA family. Consists of a catalytic RNA component (M1 or rnpB) and a protein subunit.

It carries out the reaction Endonucleolytic cleavage of RNA, removing 5'-extranucleotides from tRNA precursor.. Functionally, RNaseP catalyzes the removal of the 5'-leader sequence from pre-tRNA to produce the mature 5'-terminus. It can also cleave other RNA substrates such as 4.5S RNA. The protein component plays an auxiliary but essential role in vivo by binding to the 5'-leader sequence and broadening the substrate specificity of the ribozyme. The sequence is that of Ribonuclease P protein component from Sodalis glossinidius (strain morsitans).